We begin with the raw amino-acid sequence, 597 residues long: MTAAPVSPREIRERLLQAIDKQSNIQNMVAVLEVISSLEKYPITKEALEETRLGKLINDVRKKTSNEDLAKRAKKLLRNWQKLIEPVTQNEQLVRGIPNLPGSANGGGSHNCKADPAPTNLLAGKPIQELKGRNDIQKAHSPKADKTPKRKRKEHRDGGQGTPGHLSKPNHELFQNSSPPPTNGIGGSPPDNLPSPLDGGLQSNNRLEPAENDKHGKIPINAVRPHTNSPGLVKHPSTSSLLKVVVLQQHSGGLDDALSHQPRSPRCSSFSPRGTRAELATRQHTTYAPKGSAPSPSQRLPGVDSAHQSPLHPSTPPATAKRLESPRQDRVSSPHKPVEQLPSTDCHQVLPRTSQQHIPRSSLVDSQTPRTGFSPESSKLDSDDAASGSDNLKRKKSRLRIECEGQSADGTGKPARVKKERRLTFDVITGQIKPLTLKDPAQVESSAPTEQHRTETDKQDLTLSLPSPFQLTNWKELSGNEIIQSYLHRQSSLLSSSGIQTQSAHYYMSEYLKQEECTKRESRKTHVLVPIVLPSDLPGRTREITSSDTDRIQNQHWPGVNGCHDTQGNWYDWTQCISLDPHGDDGRLNILPYVCLD.

The 78-residue stretch at 10 to 87 (EIRERLLQAI…RNWQKLIEPV (78 aa)) folds into the TFIIS N-terminal domain. Disordered regions lie at residues 96-236 (GIPN…VKHP), 254-418 (LDDA…ARVK), and 436-459 (TLKD…TDKQ). The segment covering 128–147 (QELKGRNDIQKAHSPKADKT) has biased composition (basic and acidic residues). Residues 226–236 (HTNSPGLVKHP) are compositionally biased toward polar residues. Residues 262 to 273 (PRSPRCSSFSPR) are compositionally biased toward low complexity. Residues 321–338 (KRLESPRQDRVSSPHKPV) show a composition bias toward basic and acidic residues. The segment covering 341–377 (LPSTDCHQVLPRTSQQHIPRSSLVDSQTPRTGFSPES) has biased composition (polar residues). Residues 450 to 459 (EQHRTETDKQ) show a composition bias toward basic and acidic residues.

It belongs to the Mediator complex subunit 26 family. Component of the Mediator complex.

Its subcellular location is the nucleus. Functionally, component of the Mediator complex, a coactivator involved in the regulated transcription of nearly all RNA polymerase II-dependent genes. Mediator functions as a bridge to convey information from gene-specific regulatory proteins to the basal RNA polymerase II transcription machinery. Mediator is recruited to promoters by direct interactions with regulatory proteins and serves as a scaffold for the assembly of a functional preinitiation complex with RNA polymerase II and the general transcription factors. This chain is Mediator of RNA polymerase II transcription subunit 26 (med26), found in Xenopus laevis (African clawed frog).